We begin with the raw amino-acid sequence, 377 residues long: Beta-lactamase (377 aa).

The N-terminal stretch at M1–A19 is a signal peptide. Residue S80 is the Acyl-ester intermediate of the active site. S80, Q136, Y166, N168, A334, and N359 together coordinate a beta-lactam.

It belongs to the class-C beta-lactamase family. In terms of assembly, monomer.

Its subcellular location is the periplasm. The catalysed reaction is a beta-lactam + H2O = a substituted beta-amino acid. With respect to regulation, inhibited by the beta-lactamase-blocking agents avibactam, enmetazobactam, relebactam, nacubactam, vaborbactam, taniborbactam, zidebactam, and beta-lactam-analog boronic acids, via a covalent binding to Ser-80. Inhibited by non-beta-lactam, benzo(b)thiophene-2-boronic acid (BZBTH2B) and various cyclic boronates. Not inhibited by clavulanic acid. Inhibited by O-aryloxycarbonyl hydroxamates, via cross-linking of the active site Ser-80 to Lys-331. Weakly inhibited by citric acid. Class C beta-lactamase which confers resistance to penicillins and cephalosporins. Has benzylpenicillin- and cephaloridine-hydrolyzing activity. Has weak cefuroxime, cefotaxime, cefoxitin and oxacillin-hydrolyzing activities. The sequence is that of Beta-lactamase from Escherichia coli (strain K12).